We begin with the raw amino-acid sequence, 463 residues long: Cytidylate cyclase (463 aa).

The region spanning 122–231 (VTMFMDIIGS…IGIRIGIDLG (110 aa)) is the Guanylate cyclase domain. Phenylalanine 125 is a binding site for a ribonucleoside 5'-triphosphate. Aspartate 127, isoleucine 128, and aspartate 171 together coordinate Mn(2+). The AGS-C domain stretch occupies residues 334-454 (KPSRIKVVIS…VISNDTVIER (121 aa)).

This sequence belongs to the adenylyl cyclase class-4/guanylyl cyclase family. Pyrimidine cyclase subfamily. As to quaternary structure, homodimer. Mn(2+) is required as a cofactor.

The protein localises to the cytoplasm. It catalyses the reaction CTP = 3',5'-cyclic CMP + diphosphate. Functionally, pycsar (pyrimidine cyclase system for antiphage resistance) provides immunity against bacteriophage. The pyrimidine cyclase (PycC) synthesizes cyclic nucleotides in response to infection; these serve as specific second messenger signals. The signal activates the adjacent effector, leading to bacterial cell death and abortive phage infection. A clade E Pycsar system. In terms of biological role, the pyrimidine cyclase gene of a two-gene Pycsar system, generates cyclic CMP (cCMP) from CTP in response to bacteriophage infection. Has little to no activity on ATP, GTP or UTP. Expression of this and adjacent effector Ec303145PycTM (AC P0DV27) confers resistance to bacteriophage P1, T5, lambda-vir and phi27. The polypeptide is Cytidylate cyclase (Escherichia coli).